A 344-amino-acid chain; its full sequence is Phosphoribosylformylglycinamidine cyclo-ligase (344 aa).

This sequence belongs to the AIR synthase family.

It localises to the cytoplasm. The catalysed reaction is 2-formamido-N(1)-(5-O-phospho-beta-D-ribosyl)acetamidine + ATP = 5-amino-1-(5-phospho-beta-D-ribosyl)imidazole + ADP + phosphate + H(+). Its pathway is purine metabolism; IMP biosynthesis via de novo pathway; 5-amino-1-(5-phospho-D-ribosyl)imidazole from N(2)-formyl-N(1)-(5-phospho-D-ribosyl)glycinamide: step 2/2. The protein is Phosphoribosylformylglycinamidine cyclo-ligase of Neisseria meningitidis serogroup C / serotype 2a (strain ATCC 700532 / DSM 15464 / FAM18).